We begin with the raw amino-acid sequence, 517 residues long: Fluconazole resistance protein 1 (517 aa).

Residues 26–52 constitute a DNA-binding region (zn(2)-C6 fungal-type); that stretch reads CDSCRIKKTKCDGKKPCNRCTLDNKIC. 4 disordered regions span residues 106–137, 250–270, 284–307, and 378–403; these read KSVD…QNST, SAQF…QQQQ, SDIE…PPTS, and GSIQ…VSSF. The segment covering 113-124 has biased composition (low complexity); that stretch reads SSPASSTPNSSS. Over residues 250–260 the composition is skewed to polar residues; that stretch reads SAQFSKGTFSP. A compositionally biased stretch (low complexity) spans 261–270; it reads QQQQLQQQQQ. Over residues 298-307 the composition is skewed to polar residues; it reads NSGSVSPPTS. The segment covering 388-398 has biased composition (basic residues); that stretch reads GSVHKPVRNHS.

It is found in the nucleus. Transcription factor that acts as a negative regulator of fluconazole resistance in C.albicans. Also confers fluconazole resistance in S.cerevisiae by activation of the PDR5 gene. This is Fluconazole resistance protein 1 (FCR1) from Candida albicans (Yeast).